Consider the following 346-residue polypeptide: tRNA-specific 2-thiouridylase MnmA (346 aa).

6–13 (AMSGGTDS) is a binding site for ATP. Cys90 functions as the Nucleophile in the catalytic mechanism. Cysteines 90 and 187 form a disulfide. Position 114 (Gly114) interacts with ATP. The interval 137-139 (KDQ) is interaction with tRNA. The active-site Cysteine persulfide intermediate is Cys187. The tract at residues 292–293 (RY) is interaction with tRNA.

The protein belongs to the MnmA/TRMU family.

It is found in the cytoplasm. The enzyme catalyses S-sulfanyl-L-cysteinyl-[protein] + uridine(34) in tRNA + AH2 + ATP = 2-thiouridine(34) in tRNA + L-cysteinyl-[protein] + A + AMP + diphosphate + H(+). Functionally, catalyzes the 2-thiolation of uridine at the wobble position (U34) of tRNA, leading to the formation of s(2)U34. The chain is tRNA-specific 2-thiouridylase MnmA from Nitratidesulfovibrio vulgaris (strain DP4) (Desulfovibrio vulgaris).